The sequence spans 359 residues: Histidinol-phosphate aminotransferase (359 aa).

K217 bears the N6-(pyridoxal phosphate)lysine mark.

It belongs to the class-II pyridoxal-phosphate-dependent aminotransferase family. Histidinol-phosphate aminotransferase subfamily. In terms of assembly, homodimer. It depends on pyridoxal 5'-phosphate as a cofactor.

The catalysed reaction is L-histidinol phosphate + 2-oxoglutarate = 3-(imidazol-4-yl)-2-oxopropyl phosphate + L-glutamate. It participates in amino-acid biosynthesis; L-histidine biosynthesis; L-histidine from 5-phospho-alpha-D-ribose 1-diphosphate: step 7/9. This Roseobacter denitrificans (strain ATCC 33942 / OCh 114) (Erythrobacter sp. (strain OCh 114)) protein is Histidinol-phosphate aminotransferase.